A 415-amino-acid polypeptide reads, in one-letter code: tRNA(Met) cytidine acetate ligase (415 aa).

Residues 7 to 20 (IVEY…HLYH), glycine 102, asparagine 165, and 190 to 191 (RI) each bind ATP.

Belongs to the TmcAL family.

It is found in the cytoplasm. It catalyses the reaction cytidine(34) in elongator tRNA(Met) + acetate + ATP = N(4)-acetylcytidine(34) in elongator tRNA(Met) + AMP + diphosphate. In terms of biological role, catalyzes the formation of N(4)-acetylcytidine (ac(4)C) at the wobble position of elongator tRNA(Met), using acetate and ATP as substrates. First activates an acetate ion to form acetyladenylate (Ac-AMP) and then transfers the acetyl group to tRNA to form ac(4)C34. The polypeptide is tRNA(Met) cytidine acetate ligase (Acetivibrio thermocellus (strain ATCC 27405 / DSM 1237 / JCM 9322 / NBRC 103400 / NCIMB 10682 / NRRL B-4536 / VPI 7372) (Clostridium thermocellum)).